We begin with the raw amino-acid sequence, 1039 residues long: Integrin alpha-4 (1039 aa).

Residues 1–40 (MFSTKSAWLRNGGADQGPRGIALREAVMLLLYFGVPTGPS) form the signal peptide. Residues 41–983 (YNLDPENALL…LHHQRPKRHF (943 aa)) are Extracellular-facing. 7 FG-GAP repeats span residues 42–107 (NLDP…PNQT), 117–184 (SGEP…TELS), 193–244 (DYTR…QYKA), 246–298 (VDRQ…ENEL), 299–358 (NIVY…GAVM), 362–419 (ERVL…GISS), and 423–485 (QRIE…HPES). Asparagine 86, asparagine 105, and asparagine 145 each carry an N-linked (GlcNAc...) asparagine glycan. A disulfide bridge links cysteine 98 with cysteine 108. 2 cysteine pairs are disulfide-bonded: cysteine 151–cysteine 172 and cysteine 190–cysteine 205. An N-linked (GlcNAc...) asparagine glycan is attached at asparagine 236. Positions 321, 323, 325, 329, 384, 386, 388, 392, 446, 448, 450, 452, and 454 each coordinate Ca(2+). Asparagine 487 carries an N-linked (GlcNAc...) asparagine glycan. Cystine bridges form between cysteine 493–cysteine 502 and cysteine 508–cysteine 564. Asparagine 525 and asparagine 545 each carry an N-linked (GlcNAc...) asparagine glycan. Positions 613-623 (KKEKDVIRKMI) match the SG1 motif. A disulfide bridge connects residues cysteine 629 and cysteine 634. N-linked (GlcNAc...) asparagine glycans are attached at residues asparagine 633, asparagine 652, and asparagine 667. An intrachain disulfide couples cysteine 705 to cysteine 718. 2 N-linked (GlcNAc...) asparagine glycosylation sites follow: asparagine 813 and asparagine 828. 2 disulfides stabilise this stretch: cysteine 859/cysteine 897 and cysteine 904/cysteine 909. Residues 984–1007 (TIIIITISLLLGLIVLLLISCVMW) form a helical membrane-spanning segment. The Cytoplasmic portion of the chain corresponds to 1008–1039 (KAGFFKRQYKSILQEENRRDSWSYVNSKSNDD). A GFFKR motif motif is present at residues 1010–1014 (GFFKR). Residue serine 1028 is modified to Phosphoserine.

The protein belongs to the integrin alpha chain family. As to quaternary structure, heterodimer of an alpha and a beta subunit. The alpha subunit can sometimes be cleaved into two non-covalently associated fragments. Alpha-4 associates with either beta-1 or beta-7. Alpha-4 interacts with PXN, LPXN, and TGFB1I1/HIC5. Interacts with CSPG4 through CSPG4 chondroitin sulfate glycosaminoglycan. Interacts with JAML; integrin alpha-4/beta-1 may regulate leukocyte to endothelial cells adhesion by controlling JAML homodimerization. ITGA4:ITGB1 is found in a ternary complex with CX3CR1 and CX3CL1. Interacts with MDK. ITGA4:ITGB1 interacts with MDK; this interaction mediates MDK-induced osteoblast cells migration through PXN phosphorylation. Integrin ITGA4:ITGB1 interacts with SVEP1 (via Sushi domain 21); thereby inhibits Ca(2+) intracellular signaling and as a result represses vasocontraction. ITGA4:ITGB1 interacts with SELP. ITGA4:ITGB1 interacts with BCAM. In terms of processing, phosphorylation on Ser-1028 inhibits PXN binding. Expressed in the media layer of the arterial wall (at protein level). Weakly expression in the thymus, spleen and mesenteric lymph nodes.

The protein resides in the membrane. Its function is as follows. Integrins alpha-4/beta-1 (VLA-4 or LPAM-2) and alpha-4/beta-7 (LPAM-1) are receptors for fibronectin. They recognize one or more domains within the alternatively spliced CS-1 and CS-5 regions of fibronectin. They are also receptors for VCAM1. Integrin alpha-4/beta-1 recognizes the sequence Q-I-D-S in VCAM1. Integrin alpha-4/beta-7 is also a receptor for MADCAM1. It recognizes the sequence L-D-T in MADCAM1. On activated endothelial cells integrin VLA-4 triggers homotypic aggregation for most VLA-4-positive leukocyte cell lines. It may also participate in cytolytic T-cell interactions with target cells. ITGA4:ITGB1 binds to fractalkine (CX3CL1) and may act as its coreceptor in CX3CR1-dependent fractalkine signaling. ITGA4:ITGB1 binds to PLA2G2A via a site (site 2) which is distinct from the classical ligand-binding site (site 1) and this induces integrin conformational changes and enhanced ligand binding to site 1. Integrin ITGA4:ITGB1 represses PRKCA-mediated L-type voltage-gated channel Ca(2+) influx and ROCK-mediated calcium sensitivity in vascular smooth muscle cells via its interaction with SVEP1, thereby inhibiting vasocontraction. This chain is Integrin alpha-4 (Itga4), found in Mus musculus (Mouse).